The sequence spans 975 residues: Glycine dehydrogenase (decarboxylating) (975 aa).

Lys-723 is modified (N6-(pyridoxal phosphate)lysine).

This sequence belongs to the GcvP family. As to quaternary structure, the glycine cleavage system is composed of four proteins: P, T, L and H. The cofactor is pyridoxal 5'-phosphate.

The catalysed reaction is N(6)-[(R)-lipoyl]-L-lysyl-[glycine-cleavage complex H protein] + glycine + H(+) = N(6)-[(R)-S(8)-aminomethyldihydrolipoyl]-L-lysyl-[glycine-cleavage complex H protein] + CO2. In terms of biological role, the glycine cleavage system catalyzes the degradation of glycine. The P protein binds the alpha-amino group of glycine through its pyridoxal phosphate cofactor; CO(2) is released and the remaining methylamine moiety is then transferred to the lipoamide cofactor of the H protein. The protein is Glycine dehydrogenase (decarboxylating) of Burkholderia ambifaria (strain ATCC BAA-244 / DSM 16087 / CCUG 44356 / LMG 19182 / AMMD) (Burkholderia cepacia (strain AMMD)).